We begin with the raw amino-acid sequence, 189 residues long: Large ribosomal subunit protein uL5c (189 aa).

The protein belongs to the universal ribosomal protein uL5 family. As to quaternary structure, part of the 50S ribosomal subunit; contacts the 5S rRNA.

Its subcellular location is the plastid. The protein resides in the chloroplast. Binds 5S rRNA, forms part of the central protuberance of the 50S subunit. In Chara vulgaris (Common stonewort), this protein is Large ribosomal subunit protein uL5c (rpl5).